Consider the following 364-residue polypeptide: Apyrase (364 aa).

Positions 1 to 35 (MRSSYRVGNPIRFQPTNVVGLLLLSLVLSFMLVQS) are cleaved as a signal peptide.

The protein belongs to the apyrase family. Ca(2+) serves as cofactor. As to expression, salivary gland (at protein level).

It is found in the secreted. It catalyses the reaction a ribonucleoside 5'-triphosphate + 2 H2O = a ribonucleoside 5'-phosphate + 2 phosphate + 2 H(+). Its function is as follows. Facilitates hematophagy by inhibiting ADP-dependent platelet aggregation in the host. Cleaves adenosine triphosphate (ATP) and adenosine diphosphate (ADP) to adenosine monophosphate (AMP) and inorganic phosphate in calcium-dependent manner. This chain is Apyrase, found in Cimex lectularius (Bed bug).